Here is an 81-residue protein sequence, read N- to C-terminus: Acyl carrier protein (81 aa).

The Carrier domain maps to 4 to 79 (SEILEKVKAI…DVLDFINNKV (76 aa)). O-(pantetheine 4'-phosphoryl)serine is present on Ser-39.

It belongs to the acyl carrier protein (ACP) family. Post-translationally, 4'-phosphopantetheine is transferred from CoA to a specific serine of apo-ACP by AcpS. This modification is essential for activity because fatty acids are bound in thioester linkage to the sulfhydryl of the prosthetic group.

The protein resides in the cytoplasm. Its pathway is lipid metabolism; fatty acid biosynthesis. Carrier of the growing fatty acid chain in fatty acid biosynthesis. The chain is Acyl carrier protein from Thermosynechococcus vestitus (strain NIES-2133 / IAM M-273 / BP-1).